Reading from the N-terminus, the 425-residue chain is Serine hydroxymethyltransferase (425 aa).

(6S)-5,6,7,8-tetrahydrofolate-binding positions include leucine 124 and 128-130; that span reads GHL. An N6-(pyridoxal phosphate)lysine modification is found at lysine 233.

The protein belongs to the SHMT family. As to quaternary structure, homodimer. Pyridoxal 5'-phosphate is required as a cofactor.

The protein localises to the cytoplasm. The enzyme catalyses (6R)-5,10-methylene-5,6,7,8-tetrahydrofolate + glycine + H2O = (6S)-5,6,7,8-tetrahydrofolate + L-serine. Its pathway is one-carbon metabolism; tetrahydrofolate interconversion. It participates in amino-acid biosynthesis; glycine biosynthesis; glycine from L-serine: step 1/1. Catalyzes the reversible interconversion of serine and glycine with tetrahydrofolate (THF) serving as the one-carbon carrier. This reaction serves as the major source of one-carbon groups required for the biosynthesis of purines, thymidylate, methionine, and other important biomolecules. Also exhibits THF-independent aldolase activity toward beta-hydroxyamino acids, producing glycine and aldehydes, via a retro-aldol mechanism. The chain is Serine hydroxymethyltransferase from Clavibacter sepedonicus (Clavibacter michiganensis subsp. sepedonicus).